Consider the following 399-residue polypeptide: Tyrosine--tRNA ligase (399 aa).

The 'HIGH' region motif lies at 42 to 51; sequence PTAPDLHLGH. Positions 226–230 match the 'KMSKS' region motif; that stretch reads KMSKS. Residue K229 participates in ATP binding. An S4 RNA-binding domain is found at 336–396; it reads MPIAAVLNKA…GRKAFARITL (61 aa).

Belongs to the class-I aminoacyl-tRNA synthetase family. TyrS type 2 subfamily. In terms of assembly, homodimer.

Its subcellular location is the cytoplasm. The catalysed reaction is tRNA(Tyr) + L-tyrosine + ATP = L-tyrosyl-tRNA(Tyr) + AMP + diphosphate + H(+). Functionally, catalyzes the attachment of tyrosine to tRNA(Tyr) in a two-step reaction: tyrosine is first activated by ATP to form Tyr-AMP and then transferred to the acceptor end of tRNA(Tyr). This chain is Tyrosine--tRNA ligase, found in Pseudomonas fluorescens (strain ATCC BAA-477 / NRRL B-23932 / Pf-5).